Consider the following 373-residue polypeptide: Queuine tRNA-ribosyltransferase (373 aa).

D91 (proton acceptor) is an active-site residue. Substrate is bound by residues 91–95 (DSGGF), D145, and Q187. The segment at 245 to 251 (GVGTPED) is RNA binding. The active-site Nucleophile is D264. The segment at 269–273 (TRNAR) is RNA binding; important for wobble base 34 recognition. Residues C302, C304, C307, and H333 each contribute to the Zn(2+) site.

This sequence belongs to the queuine tRNA-ribosyltransferase family. In terms of assembly, homodimer. Within each dimer, one monomer is responsible for RNA recognition and catalysis, while the other monomer binds to the replacement base PreQ1. Zn(2+) serves as cofactor.

It carries out the reaction 7-aminomethyl-7-carbaguanine + guanosine(34) in tRNA = 7-aminomethyl-7-carbaguanosine(34) in tRNA + guanine. It participates in tRNA modification; tRNA-queuosine biosynthesis. In terms of biological role, catalyzes the base-exchange of a guanine (G) residue with the queuine precursor 7-aminomethyl-7-deazaguanine (PreQ1) at position 34 (anticodon wobble position) in tRNAs with GU(N) anticodons (tRNA-Asp, -Asn, -His and -Tyr). Catalysis occurs through a double-displacement mechanism. The nucleophile active site attacks the C1' of nucleotide 34 to detach the guanine base from the RNA, forming a covalent enzyme-RNA intermediate. The proton acceptor active site deprotonates the incoming PreQ1, allowing a nucleophilic attack on the C1' of the ribose to form the product. After dissociation, two additional enzymatic reactions on the tRNA convert PreQ1 to queuine (Q), resulting in the hypermodified nucleoside queuosine (7-(((4,5-cis-dihydroxy-2-cyclopenten-1-yl)amino)methyl)-7-deazaguanosine). In Syntrophobacter fumaroxidans (strain DSM 10017 / MPOB), this protein is Queuine tRNA-ribosyltransferase.